The following is a 153-amino-acid chain: ATP synthase subunit b' (153 aa).

A helical membrane pass occupies residues 23 to 40; sequence LMAIQVVALTYILNSLFF.

It belongs to the ATPase B chain family. F-type ATPases have 2 components, F(1) - the catalytic core - and F(0) - the membrane proton channel. F(1) has five subunits: alpha(3), beta(3), gamma(1), delta(1), epsilon(1). F(0) has four main subunits: a(1), b(1), b'(1) and c(10-14). The alpha and beta chains form an alternating ring which encloses part of the gamma chain. F(1) is attached to F(0) by a central stalk formed by the gamma and epsilon chains, while a peripheral stalk is formed by the delta, b and b' chains.

It is found in the cellular thylakoid membrane. Functionally, f(1)F(0) ATP synthase produces ATP from ADP in the presence of a proton or sodium gradient. F-type ATPases consist of two structural domains, F(1) containing the extramembraneous catalytic core and F(0) containing the membrane proton channel, linked together by a central stalk and a peripheral stalk. During catalysis, ATP synthesis in the catalytic domain of F(1) is coupled via a rotary mechanism of the central stalk subunits to proton translocation. Component of the F(0) channel, it forms part of the peripheral stalk, linking F(1) to F(0). The b'-subunit is a diverged and duplicated form of b found in plants and photosynthetic bacteria. This is ATP synthase subunit b' from Prochlorococcus marinus (strain MIT 9215).